The sequence spans 548 residues: Probable delta-1-pyrroline-5-carboxylate dehydrogenase (548 aa).

Catalysis depends on E298, which acts as the Proton acceptor. The Nucleophile role is filled by C332. A phosphoserine mark is found at S391, S394, and S396.

This sequence belongs to the aldehyde dehydrogenase family.

It carries out the reaction L-glutamate 5-semialdehyde + NAD(+) + H2O = L-glutamate + NADH + 2 H(+). The protein operates within amino-acid degradation; L-proline degradation into L-glutamate; L-glutamate from L-proline: step 2/2. The polypeptide is Probable delta-1-pyrroline-5-carboxylate dehydrogenase (Schizosaccharomyces pombe (strain 972 / ATCC 24843) (Fission yeast)).